Consider the following 2177-residue polypeptide: Brefeldin A-inhibited guanine nucleotide-exchange protein 3 (2177 aa).

Low complexity predominate over residues Thr-282–Ser-295. Residues Thr-282 to His-301 are disordered. Ser-471 bears the Phosphoserine mark. Polar residues predominate over residues Thr-511–Thr-524. Disordered stretches follow at residues Thr-511–Pro-542, Ala-617–Ser-636, and Asp-1031–Ala-1076. The 214-residue stretch at Arg-583–Arg-796 folds into the SEC7 domain. The span at Ala-618–Val-627 shows a compositional bias: basic and acidic residues. 2 positions are modified to phosphoserine: Ser-632 and Ser-636. Over residues Gly-1032–Thr-1047 the composition is skewed to polar residues. At Ser-1049 the chain carries Phosphoserine. Residues Gly-1492 to Leu-1512 traverse the membrane as a helical segment. Disordered regions lie at residues Ser-1848 to Lys-1877, Glu-1946 to Glu-2004, and Lys-2033 to Leu-2064. Residues Thr-1960 to Gly-1974 are compositionally biased toward basic and acidic residues. Phosphoserine is present on Ser-1991. Composition is skewed to basic and acidic residues over residues Lys-1993–Glu-2004 and Lys-2043–Glu-2052. A phosphoserine mark is found at Ser-2079, Ser-2081, Ser-2095, Ser-2101, and Ser-2103. The tract at residues Ala-2082–Ser-2103 is disordered.

Interacts with PHB2. Expressed in breast cancer cell lines. Not expressed in normal tissues such as duct, mammary gland, lung, heart, liver, kidnay, bone marrow.

The protein localises to the cytoplasm. It is found in the cytoplasmic vesicle. Its subcellular location is the secretory vesicle. The protein resides in the secretory vesicle membrane. Functionally, participates in the regulation of systemic glucose homeostasis, where it negatively regulates insulin granule biogenesis in pancreatic islet beta cells. Also regulates glucagon granule production in pancreatic alpha cells. Inhibits nuclear translocation of the transcriptional coregulator PHB2 and may enhance estrogen receptor alpha (ESR1) transcriptional activity in breast cancer cells. This is Brefeldin A-inhibited guanine nucleotide-exchange protein 3 from Homo sapiens (Human).